We begin with the raw amino-acid sequence, 1166 residues long: MQPATQLQFTNHLSPNGQCILQPPPTPSLPDKMEKAPPQPQHEGLKSEEHLPQQPAAAKTVSRHIPRLRAVVESQAFKNILVDEMDMMHARAATLIQANWRGYRLRQKLISQMTAAKAIQEAWRRFNKRHILHSSKLLVKKVRAEDGNIPYHAPQQVRFQHPEENCLLSPPVMVNKETQFPSYDNLVLCRPQSSPLLKPPAAQGTPEPCVQAPHAAGVRGVAFLPHQTVTIRFPCPVSLDAKCQSCLLTRTIRSTCLVHIEGDSVKTKRVTARTNKAGVPETPLSRRYDKAVMGPSRAQTQGPVEAETPKAPFQICPGPVITKTLLQTYPVVSMTLPQTYSASTTTTTPHKTSPVPKITITKTPVQMYPGPTVMTKTAPHTCPMPTMTKIQVHSTASRTGTPRQTCRATITAKHQPQVSLLASIMKSPPQVCPGPAMAKTPPQTHPVATPAKSPLQTCLAATTSNTSSQMSPVGLTKPSRQTRLAAMITKTPAQLRSVATILKTLCLASPTVANVKAPPQVAVRGSIHDNPPKAKATMNMKQAAEAVKASSPSCLAEGKIRCLAQSRLGTGAPRAPAKLPLEAEKIKTGPQKPVKADMALKTSVAVEVAGAPSWTKVAEEGDKPSHLYVPVDVAVTLPRGQPAAPLTNASSQRHPPCLSQRPLATPLTKASSQGHLPIELTKTPSLAHLVTCLSKMHSQAHLATGAMKVQSQVPLATCLTKTQSRGQPIITKRLIPAHQAADLSSNTHSQVLLTGSKVSNQACQHLSGLSAPPWAKPEDRWTQPKPHGHVPGKTTQGGPCPAACEVQGTLVPLMAPTGHSTCHVESWGDSGATRAQPSMPSQVVPCQEDTGPVDAGVASGQSWKRVWEPARGAASWETRRNKAVVHPRQSGEPMVSMQAAEEIRILAVTTIQAGVRGYLVRRRIRVWHRRATVIQATWRGYRMRRNLAHLCRATTIIQAAWRGYSTRRDQARHRQMLHPVTWVELGGGARVMSDRSWVQDGRARTVSDHRCFQSCQAKPCSVCHSLSSRIGSPPSVVMLVGSSPRTCHTCGRTQPTRVVQGMGRGAGGPGAVSRASAYQRAVPSPRQPRRRDKAATAIQSAWRGFKIRQQMRQQQMAAKMVQATWRGHHTRSCLKSTEALLGPADPWSSSQHMHWASSQHTHWPGI.

Polar residues predominate over residues 1 to 19 (MQPATQLQFTNHLSPNGQC). Positions 1–56 (MQPATQLQFTNHLSPNGQCILQPPPTPSLPDKMEKAPPQPQHEGLKSEEHLPQQPA) are disordered. In terms of domain architecture, IQ 1 spans 89–118 (HARAATLIQANWRGYRLRQKLISQMTAAKA). 3 disordered regions span residues 431–450 (VCPG…VATP), 769–797 (LSAP…TTQG), and 829–848 (DSGA…PCQE). IQ domains lie at 907–932 (AVTT…RRAT), 928–955 (HRRA…RATT), 952–979 (RATT…MLHP), 1091–1119 (RDKA…MAAK), and 1114–1143 (QQMA…LLGP). Residues 1145–1166 (DPWSSSQHMHWASSQHTHWPGI) are disordered. Residues 1147–1166 (WSSSQHMHWASSQHTHWPGI) are compositionally biased toward polar residues.

Interacts with calmodulin.

Essential for spermiogenesis and fertilization. May be required for manchette assembly in elongating spermatids. The protein is IQ domain-containing protein N (IQCN) of Macaca fascicularis (Crab-eating macaque).